The following is an 886-amino-acid chain: Alanine--tRNA ligase (886 aa).

Residues His-564, His-568, Cys-676, and His-680 each coordinate Zn(2+).

This sequence belongs to the class-II aminoacyl-tRNA synthetase family. Requires Zn(2+) as cofactor.

It is found in the cytoplasm. It carries out the reaction tRNA(Ala) + L-alanine + ATP = L-alanyl-tRNA(Ala) + AMP + diphosphate. In terms of biological role, catalyzes the attachment of alanine to tRNA(Ala) in a two-step reaction: alanine is first activated by ATP to form Ala-AMP and then transferred to the acceptor end of tRNA(Ala). Also edits incorrectly charged Ser-tRNA(Ala) and Gly-tRNA(Ala) via its editing domain. This chain is Alanine--tRNA ligase, found in Methylobacterium sp. (strain 4-46).